The primary structure comprises 119 residues: Beta-2-microglobulin (119 aa).

Residues 1–21 (MGKAAAVVLVTLVALLGLAQA) form the signal peptide. Residues 25-113 (PKVQVYSRFP…HETLKEPQVY (89 aa)) enclose the Ig-like C1-type domain. Cysteines 45 and 100 form a disulfide.

The protein belongs to the beta-2-microglobulin family. Heterodimer of an alpha chain and a beta chain. Beta-2-microglobulin is the beta-chain of major histocompatibility complex class I molecules.

It localises to the secreted. Its function is as follows. Component of the class I major histocompatibility complex (MHC). Involved in the presentation of peptide antigens to the immune system. The chain is Beta-2-microglobulin (B2M) from Gallus gallus (Chicken).